The sequence spans 349 residues: Mitochondrial carrier protein SCaMC-3L (349 aa).

4 consecutive transmembrane segments (helical) span residues 88–104 (GALW…GAVS), 149–168 (GNGI…FSVF), 188–205 (LLAG…INPM), and 243–261 (YLPN…LAVY). Solcar repeat units lie at residues 88-174 (GALW…CKNY) and 182-267 (PPFQ…LNCL).

Belongs to the mitochondrial carrier (TC 2.A.29) family.

The protein localises to the mitochondrion inner membrane. It catalyses the reaction Mg(2+)(out) + phosphate(in) + ATP(out) = Mg(2+)(in) + phosphate(out) + ATP(in). The catalysed reaction is ADP(out) + phosphate(in) + H(+)(out) = ADP(in) + phosphate(out) + H(+)(in). Its function is as follows. Calcium-independent ATP-Mg/Pi exchanger that catalyzes the electroneutral exchange of Mg-ATP or free ADP against an hydrogenphosphate and participates in the net transport of adenine nucleotides across the mitochondria inner membrane. In Bos taurus (Bovine), this protein is Mitochondrial carrier protein SCaMC-3L.